Consider the following 167-residue polypeptide: Small ribosomal subunit protein uS5 (167 aa).

The 64-residue stretch at 12–75 folds into the S5 DRBM domain; that stretch reads LQEKLIAVNR…EKARRNMTTI (64 aa).

This sequence belongs to the universal ribosomal protein uS5 family. As to quaternary structure, part of the 30S ribosomal subunit. Contacts proteins S4 and S8.

In terms of biological role, with S4 and S12 plays an important role in translational accuracy. Its function is as follows. Located at the back of the 30S subunit body where it stabilizes the conformation of the head with respect to the body. This Vibrio parahaemolyticus serotype O3:K6 (strain RIMD 2210633) protein is Small ribosomal subunit protein uS5.